Reading from the N-terminus, the 464-residue chain is Alpha-amylase (464 aa).

Positions methionine 1–alanine 21 are cleaved as a signal peptide. 2 residues coordinate substrate: histidine 107 and arginine 213. The Nucleophile role is filled by aspartate 215. Lysine 218 to histidine 219 provides a ligand contact to substrate. Glutamate 242 serves as the catalytic Proton donor. Positions 247 and 313 each coordinate substrate.

Belongs to the glycosyl hydrolase 13 family.

It is found in the secreted. The catalysed reaction is Endohydrolysis of (1-&gt;4)-alpha-D-glucosidic linkages in polysaccharides containing three or more (1-&gt;4)-alpha-linked D-glucose units.. The chain is Alpha-amylase from Aeromonas hydrophila.